The chain runs to 175 residues: FMRFamide-like neuropeptides 1 (175 aa).

The N-terminal stretch at methionine 1–alanine 21 is a signal peptide. A propeptide spanning residues glutamate 22–lysine 68 is cleaved from the precursor. Tyrosine 76 bears the Tyrosine amide mark. Residues serine 79 to glycine 86 constitute a propeptide that is removed on maturation. Phenylalanine 98, phenylalanine 108, phenylalanine 120, phenylalanine 130, phenylalanine 142, and phenylalanine 154 each carry phenylalanine amide. Residues serine 157–serine 165 constitute a propeptide that is removed on maturation. Residue phenylalanine 173 is modified to Phenylalanine amide.

It belongs to the FARP (FMRFamide related peptide) family. In terms of processing, may be processed by convertase egl-3. As to expression, each flp gene is expressed in a distinct set of neurons. Flp-1 is expressed in the AVA interneurons, the M5 cholinergic pharyngeal motoneurons, and the AIA, AIY, AVE, AVK, RIG and RMG neurons.

The protein localises to the secreted. Together with flp-18, plays a homeostatic role by acting on the GABAergic neural transmission at neuromuscular junctions to prevent overexcitation of the locomotor circuit. In terms of biological role, inhibits the activity of dissected pharyngeal myogenic muscle system. Functionally, DPNFLRF-amide: Inhibits the activity of dissected pharyngeal myogenic muscle system. Its function is as follows. Acts as a ligand for the npr-22 receptor in vitro. The protein is FMRFamide-like neuropeptides 1 (flp-1) of Caenorhabditis elegans.